The following is a 314-amino-acid chain: Olfactory receptor 52K1 (314 aa).

The Extracellular segment spans residues 1-27 (MLPSNITSTHPAVFLLVGIPGLEHLHA). Residue N5 is glycosylated (N-linked (GlcNAc...) asparagine). A helical transmembrane segment spans residues 28–48 (WISIPFCFAYTLALLGNCTLL). The Cytoplasmic portion of the chain corresponds to 49–56 (FIIQADAA). Residues 57 to 77 (LHEPMYLFLAMLATIDLVLSS) traverse the membrane as a helical segment. At 78–101 (TTLPKMLAIFWFRDQEINFFACLV) the chain is on the extracellular side. C99 and C191 are disulfide-bonded. Residues 102–122 (QMFFLHSFSIMESAVLLAMAF) form a helical membrane-spanning segment. Topologically, residues 123 to 141 (DRYVAICKPLHYTTVLTGS) are cytoplasmic. Residues 142–162 (LITKIGMAAVARAVTLMTPLP) form a helical membrane-spanning segment. At 163–198 (FLLRRFHYCRGPVIAHCYCEHMAVVRLACGDTSFNN) the chain is on the extracellular side. Residues 199 to 219 (IYGIAVAMFIVVLDLLFVILS) traverse the membrane as a helical segment. Residues 220 to 239 (YVFILQAVLQLASQEARYKA) lie on the Cytoplasmic side of the membrane. Residues 240 to 260 (FGTCVSHIGAILSTYTPVVIS) form a helical membrane-spanning segment. Residues 261–275 (SVMHRVARHAAPRVH) are Extracellular-facing. The helical transmembrane segment at 276-296 (ILLAIFYLLFPPMVNPIIYGV) threads the bilayer. Over 297–314 (KTKQIREYVLSLFQRKNM) the chain is Cytoplasmic.

The protein belongs to the G-protein coupled receptor 1 family.

The protein localises to the cell membrane. Functionally, odorant receptor. The sequence is that of Olfactory receptor 52K1 (OR52K1) from Homo sapiens (Human).